The sequence spans 316 residues: MKIILLYGGRSAEHDVSLLSAFSVVNAVYYNYYQVQLVMITRDGQWLKGSLLTEAPTSKEVLNLTDSAYQGTPIQPGEIKEEDAIVFPLLHGPNGEDGTIQGFLETIGMPYVGAGVLTSACGMDKIMTKYILQAAGIPQVPYVPVLKNYWKENPKKVFEQCEGSLLYPMFIKPANMGSSVGITKAENREELQNALQEAYRYDTRAIVEQGIEAREIEVAVLGNEDVRTTMPGEIVKDVAFYDYNSKYLDNKIEMQIPAQIPEETQAKAQEFAKKAYTMLGGSGLSRCDFFLTNKNELFLNELNTIPALQAEFCRYP.

Residues lysine 129–proline 316 form the ATP-grasp domain. Glutamate 162–glutamate 217 contributes to the ATP binding site. Residues aspartate 288, glutamate 301, and asparagine 303 each coordinate Mg(2+).

Belongs to the D-alanine--D-alanine ligase family. Requires Mg(2+) as cofactor. It depends on Mn(2+) as a cofactor.

The protein localises to the cytoplasm. It carries out the reaction 2 D-alanine + ATP = D-alanyl-D-alanine + ADP + phosphate + H(+). It functions in the pathway cell wall biogenesis; peptidoglycan biosynthesis. Cell wall formation. In Enterococcus gallinarum, this protein is D-alanine--D-alanine ligase (ddl).